The primary structure comprises 471 residues: Glutamate--tRNA ligase (471 aa).

Residues 9 to 19 carry the 'HIGH' region motif; the sequence is PSPTGFLHVGG. Positions 98, 100, 125, and 127 each coordinate Zn(2+). Residues 237 to 241 carry the 'KMSKS' region motif; it reads KLSKR. K240 contributes to the ATP binding site.

This sequence belongs to the class-I aminoacyl-tRNA synthetase family. Glutamate--tRNA ligase type 1 subfamily. As to quaternary structure, monomer. Zn(2+) is required as a cofactor.

It localises to the cytoplasm. It carries out the reaction tRNA(Glu) + L-glutamate + ATP = L-glutamyl-tRNA(Glu) + AMP + diphosphate. Its function is as follows. Catalyzes the attachment of glutamate to tRNA(Glu) in a two-step reaction: glutamate is first activated by ATP to form Glu-AMP and then transferred to the acceptor end of tRNA(Glu). This Aeromonas salmonicida (strain A449) protein is Glutamate--tRNA ligase.